We begin with the raw amino-acid sequence, 198 residues long: Recombination protein RecR (198 aa).

The segment at Cys57–Cys72 adopts a C4-type zinc-finger fold. The Toprim domain maps to Ser80–Pro175.

It belongs to the RecR family.

May play a role in DNA repair. It seems to be involved in an RecBC-independent recombinational process of DNA repair. It may act with RecF and RecO. The protein is Recombination protein RecR of Bacillus velezensis (strain DSM 23117 / BGSC 10A6 / LMG 26770 / FZB42) (Bacillus amyloliquefaciens subsp. plantarum).